The following is a 404-amino-acid chain: Probable tRNA sulfurtransferase (404 aa).

Residues 60–165 (RSVIEALKPV…DEAAYLSHED (106 aa)) enclose the THUMP domain. ATP is bound by residues 183–184 (ML), 208–209 (HF), R265, G287, and Q296.

It belongs to the ThiI family.

It is found in the cytoplasm. The catalysed reaction is [ThiI sulfur-carrier protein]-S-sulfanyl-L-cysteine + a uridine in tRNA + 2 reduced [2Fe-2S]-[ferredoxin] + ATP + H(+) = [ThiI sulfur-carrier protein]-L-cysteine + a 4-thiouridine in tRNA + 2 oxidized [2Fe-2S]-[ferredoxin] + AMP + diphosphate. The enzyme catalyses [ThiS sulfur-carrier protein]-C-terminal Gly-Gly-AMP + S-sulfanyl-L-cysteinyl-[cysteine desulfurase] + AH2 = [ThiS sulfur-carrier protein]-C-terminal-Gly-aminoethanethioate + L-cysteinyl-[cysteine desulfurase] + A + AMP + 2 H(+). The protein operates within cofactor biosynthesis; thiamine diphosphate biosynthesis. Functionally, catalyzes the ATP-dependent transfer of a sulfur to tRNA to produce 4-thiouridine in position 8 of tRNAs, which functions as a near-UV photosensor. Also catalyzes the transfer of sulfur to the sulfur carrier protein ThiS, forming ThiS-thiocarboxylate. This is a step in the synthesis of thiazole, in the thiamine biosynthesis pathway. The sulfur is donated as persulfide by IscS. The chain is Probable tRNA sulfurtransferase from Streptococcus equi subsp. equi (strain 4047).